The following is a 150-amino-acid chain: CASP-like protein 2 (150 aa).

At 1-17 (MKPEAGDGRSGWRWVAT) the chain is on the cytoplasmic side. A helical membrane pass occupies residues 18-38 (FDLILRLAAIVATSTAVLAAM). Topologically, residues 39–41 (GKT) are extracellular. Residues 42 to 62 (FVVVVNGVACFYLLMSLPVSI) traverse the membrane as a helical segment. The Cytoplasmic segment spans residues 63–82 (FNIMRPGACPANRAVLTALD). Residues 83–103 (MVTVALVTAGALVAGILYLVH) form a helical membrane-spanning segment. At 104-121 (KAGDTHADWFSIWSQLDS) the chain is on the extracellular side. A helical transmembrane segment spans residues 122-142 (LSYLAVLALILHVLLSGSILY). Topologically, residues 143-150 (KQALNIMF) are cytoplasmic.

The protein belongs to the Casparian strip membrane proteins (CASP) family. Homodimer and heterodimers.

It localises to the cell membrane. The protein is CASP-like protein 2 of Picea sitchensis (Sitka spruce).